The chain runs to 428 residues: Histidinol dehydrogenase (428 aa).

Substrate is bound by residues serine 234, glutamine 256, and histidine 259. The Zn(2+) site is built by glutamine 256 and histidine 259. Active-site proton acceptor residues include glutamate 323 and histidine 324. 4 residues coordinate substrate: histidine 324, aspartate 357, glutamate 411, and histidine 416. Aspartate 357 contacts Zn(2+). Residue histidine 416 participates in Zn(2+) binding.

It belongs to the histidinol dehydrogenase family. The cofactor is Zn(2+).

It carries out the reaction L-histidinol + 2 NAD(+) + H2O = L-histidine + 2 NADH + 3 H(+). The protein operates within amino-acid biosynthesis; L-histidine biosynthesis; L-histidine from 5-phospho-alpha-D-ribose 1-diphosphate: step 9/9. Its function is as follows. Catalyzes the sequential NAD-dependent oxidations of L-histidinol to L-histidinaldehyde and then to L-histidine. This chain is Histidinol dehydrogenase, found in Campylobacter jejuni (strain RM1221).